Reading from the N-terminus, the 98-residue chain is Large ribosomal subunit protein uL23 (98 aa).

This sequence belongs to the universal ribosomal protein uL23 family. As to quaternary structure, part of the 50S ribosomal subunit. Contacts protein L29, and trigger factor when it is bound to the ribosome.

One of the early assembly proteins it binds 23S rRNA. One of the proteins that surrounds the polypeptide exit tunnel on the outside of the ribosome. Forms the main docking site for trigger factor binding to the ribosome. This is Large ribosomal subunit protein uL23 from Koribacter versatilis (strain Ellin345).